Here is a 558-residue protein sequence, read N- to C-terminus: Formate--tetrahydrofolate ligase (558 aa).

ATP is bound at residue 65–72 (TPAGEGKT).

The protein belongs to the formate--tetrahydrofolate ligase family.

The enzyme catalyses (6S)-5,6,7,8-tetrahydrofolate + formate + ATP = (6R)-10-formyltetrahydrofolate + ADP + phosphate. It participates in one-carbon metabolism; tetrahydrofolate interconversion. The protein is Formate--tetrahydrofolate ligase of Methylobacterium sp. (strain 4-46).